Here is a 341-residue protein sequence, read N- to C-terminus: MKVSDFDYELPESHIARYPPDERGSTRLLVLQRSTGEIMHSRYAGLHGFLRKGDLLVLNNSRVVKARMFAFKPTGGKIELVLLEKHGDEQNLVLYRGSLKKGDALLAYGCEFGVEELVGQGVAVLSVKGEGTVQDVFERYAAMPIPPYLKREAEEIDRERYQTVFAEQPGSVAAPTASLNMTGELFDSLRQKGVSIASMTLHVGLGTFLPIRVDHFDEHVMHREFYVIPDETIALIRTTKNNGGRVIAVGTTVTRALEHAADVVFNSNGNGSVSGEADIFIYPGYRFRVIDALLTNFHAPRSTVLMLTAAFAGAEKLFHAYAEALRWEYDFLSYGDSMLIL.

It belongs to the QueA family. As to quaternary structure, monomer.

It localises to the cytoplasm. It catalyses the reaction 7-aminomethyl-7-carbaguanosine(34) in tRNA + S-adenosyl-L-methionine = epoxyqueuosine(34) in tRNA + adenine + L-methionine + 2 H(+). Its pathway is tRNA modification; tRNA-queuosine biosynthesis. Functionally, transfers and isomerizes the ribose moiety from AdoMet to the 7-aminomethyl group of 7-deazaguanine (preQ1-tRNA) to give epoxyqueuosine (oQ-tRNA). This Chlorobium phaeobacteroides (strain DSM 266 / SMG 266 / 2430) protein is S-adenosylmethionine:tRNA ribosyltransferase-isomerase.